An 811-amino-acid polypeptide reads, in one-letter code: Probable inorganic carbon transporter subunit DabA (811 aa).

Residues Cys336, Asp338, His498, and Cys513 each coordinate Zn(2+).

Belongs to the inorganic carbon transporter (TC 9.A.2) DabA family. Forms a complex with DabB. Zn(2+) serves as cofactor.

The protein localises to the cell inner membrane. Part of an energy-coupled inorganic carbon pump. The protein is Probable inorganic carbon transporter subunit DabA of Azorhizobium caulinodans (strain ATCC 43989 / DSM 5975 / JCM 20966 / LMG 6465 / NBRC 14845 / NCIMB 13405 / ORS 571).